The chain runs to 177 residues: MLESKMKLVGKIREAHGLKGDLYVLVFSGEIAWAKRMKTFGLKAKDSDEIKTFTVERTKPFKKGLIVKAAEVADRTAAEGLEHMEFFIDDELMVSKPGETIFLSEIKNFKLKNPEQTVLGEIVGFSSNGVQDLLVVETTDGKTAEVPFVDAFIKKIDFKHQAVVMDLPEGLFDIENA.

Residues 98–171 (GETIFLSEIK…AVVMDLPEGL (74 aa)) enclose the PRC barrel domain.

This sequence belongs to the RimM family. Binds ribosomal protein uS19.

The protein resides in the cytoplasm. An accessory protein needed during the final step in the assembly of 30S ribosomal subunit, possibly for assembly of the head region. Essential for efficient processing of 16S rRNA. May be needed both before and after RbfA during the maturation of 16S rRNA. It has affinity for free ribosomal 30S subunits but not for 70S ribosomes. This chain is Ribosome maturation factor RimM, found in Bdellovibrio bacteriovorus (strain ATCC 15356 / DSM 50701 / NCIMB 9529 / HD100).